Reading from the N-terminus, the 218-residue chain is Probable septum site-determining protein MinC (218 aa).

This sequence belongs to the MinC family. In terms of assembly, interacts with MinD and FtsZ.

Its function is as follows. Cell division inhibitor that blocks the formation of polar Z ring septums. Rapidly oscillates between the poles of the cell to destabilize FtsZ filaments that have formed before they mature into polar Z rings. Prevents FtsZ polymerization. The sequence is that of Probable septum site-determining protein MinC from Kosmotoga olearia (strain ATCC BAA-1733 / DSM 21960 / TBF 19.5.1).